We begin with the raw amino-acid sequence, 562 residues long: Alpha-amylase 2 (562 aa).

N236 contacts Ca(2+). D309 serves as the catalytic Nucleophile. The active-site Proton donor is E338.

Belongs to the glycosyl hydrolase 13 family. As to quaternary structure, monomer. Requires Ca(2+) as cofactor.

Its subcellular location is the cytoplasm. It carries out the reaction Endohydrolysis of (1-&gt;4)-alpha-D-glucosidic linkages in polysaccharides containing three or more (1-&gt;4)-alpha-linked D-glucose units.. The chain is Alpha-amylase 2 (amyB) from Dictyoglomus thermophilum (strain ATCC 35947 / DSM 3960 / H-6-12).